Reading from the N-terminus, the 205-residue chain is Adenylyl-sulfate kinase (205 aa).

An ATP-binding site is contributed by 35-42 (GLSGAGKS). Ser109 serves as the catalytic Phosphoserine intermediate.

This sequence belongs to the APS kinase family.

It catalyses the reaction adenosine 5'-phosphosulfate + ATP = 3'-phosphoadenylyl sulfate + ADP + H(+). It participates in sulfur metabolism; hydrogen sulfide biosynthesis; sulfite from sulfate: step 2/3. Catalyzes the synthesis of activated sulfate. The protein is Adenylyl-sulfate kinase of Acaryochloris marina (strain MBIC 11017).